Here is a 323-residue protein sequence, read N- to C-terminus: Phosphopantothenate--cysteine ligase 2 (323 aa).

The protein belongs to the PPC synthetase family. As to quaternary structure, homodimer.

The catalysed reaction is (R)-4'-phosphopantothenate + L-cysteine + CTP = N-[(R)-4-phosphopantothenoyl]-L-cysteine + CMP + diphosphate + H(+). The protein operates within cofactor biosynthesis; coenzyme A biosynthesis; CoA from (R)-pantothenate: step 2/5. Catalyzes the first step in the biosynthesis of coenzyme A from vitamin B5, where cysteine is conjugated to 4'-phosphopantothenate to form 4-phosphopantothenoylcysteine. The chain is Phosphopantothenate--cysteine ligase 2 from Oryza sativa subsp. japonica (Rice).